Here is a 205-residue protein sequence, read N- to C-terminus: Guanylate kinase (205 aa).

The 180-residue stretch at glycine 6–valine 185 folds into the Guanylate kinase-like domain. Glycine 13–glycine 20 is a binding site for ATP.

Belongs to the guanylate kinase family.

Its subcellular location is the cytoplasm. The catalysed reaction is GMP + ATP = GDP + ADP. In terms of biological role, essential for recycling GMP and indirectly, cGMP. The polypeptide is Guanylate kinase (Bacillus anthracis).